The sequence spans 20 residues: Equinatoxin-1 (20 aa).

The plays an important role in the hemolytic activity stretch occupies residues 3 to 12 (AVAGAVIEGA). The tract at residues 11–20 (GASLTFNVLQ) is N-terminal region.

The protein belongs to the actinoporin family. Sea anemone subfamily. As to quaternary structure, octamer or nonamer in membranes. Monomer in the soluble state.

Its subcellular location is the secreted. It localises to the nematocyst. It is found in the target cell membrane. Functionally, pore-forming protein that forms cations-selective hydrophilic pores of around 1 nm and causes cardiac stimulation and cytolysis. Pore formation is a multi-step process that involves specific recognition of membrane sphingomyelin (but neither cholesterol nor phosphatidylcholine) using aromatic rich region and adjacent phosphocholine (POC) binding site, firm binding to the membrane (mainly driven by hydrophobic interactions) accompanied by the transfer of the N-terminal region to the lipid-water interface and finally pore formation after oligomerization of monomers. Cytolytic effects include red blood cells hemolysis, platelet aggregation and lysis, cytotoxic and cytostatic effects on fibroblasts. Lethality in mammals has been ascribed to severe vasospasm of coronary vessels, cardiac arrhythmia, and inotropic effects. The polypeptide is Equinatoxin-1 (Actinia equina (Beadlet anemone)).